Reading from the N-terminus, the 216-residue chain is LexA repressor (216 aa).

A DNA-binding region (H-T-H motif) is located at residues 28-48 (RAEIAAEFGFSSPNAAEEHLR). Residues S134 and K171 each act as for autocatalytic cleavage activity in the active site.

The protein belongs to the peptidase S24 family. In terms of assembly, homodimer.

The catalysed reaction is Hydrolysis of Ala-|-Gly bond in repressor LexA.. Functionally, represses a number of genes involved in the response to DNA damage (SOS response), including recA and lexA. In the presence of single-stranded DNA, RecA interacts with LexA causing an autocatalytic cleavage which disrupts the DNA-binding part of LexA, leading to derepression of the SOS regulon and eventually DNA repair. The sequence is that of LexA repressor from Ralstonia nicotianae (strain ATCC BAA-1114 / GMI1000) (Ralstonia solanacearum).